The chain runs to 103 residues: Phosphoribosyl-ATP pyrophosphatase (103 aa).

Belongs to the PRA-PH family.

The protein resides in the cytoplasm. It carries out the reaction 1-(5-phospho-beta-D-ribosyl)-ATP + H2O = 1-(5-phospho-beta-D-ribosyl)-5'-AMP + diphosphate + H(+). Its pathway is amino-acid biosynthesis; L-histidine biosynthesis; L-histidine from 5-phospho-alpha-D-ribose 1-diphosphate: step 2/9. The polypeptide is Phosphoribosyl-ATP pyrophosphatase (hisE) (Rhodobacter capsulatus (strain ATCC BAA-309 / NBRC 16581 / SB1003)).